A 312-amino-acid polypeptide reads, in one-letter code: 4-diphosphocytidyl-2-C-methyl-D-erythritol kinase (312 aa).

Residue Lys16 is part of the active site. Pro101–Ser111 is an ATP binding site. Residue Asp143 is part of the active site.

This sequence belongs to the GHMP kinase family. IspE subfamily.

It carries out the reaction 4-CDP-2-C-methyl-D-erythritol + ATP = 4-CDP-2-C-methyl-D-erythritol 2-phosphate + ADP + H(+). It participates in isoprenoid biosynthesis; isopentenyl diphosphate biosynthesis via DXP pathway; isopentenyl diphosphate from 1-deoxy-D-xylulose 5-phosphate: step 3/6. Its function is as follows. Catalyzes the phosphorylation of the position 2 hydroxy group of 4-diphosphocytidyl-2C-methyl-D-erythritol. This chain is 4-diphosphocytidyl-2-C-methyl-D-erythritol kinase, found in Prochlorococcus marinus subsp. pastoris (strain CCMP1986 / NIES-2087 / MED4).